A 305-amino-acid chain; its full sequence is Aspartate carbamoyltransferase catalytic subunit (305 aa).

The carbamoyl phosphate site is built by Arg54 and Thr55. Lys82 contacts L-aspartate. Residues Arg104, His132, and Gln135 each coordinate carbamoyl phosphate. Residues Arg165 and Arg218 each coordinate L-aspartate. Carbamoyl phosphate is bound by residues Gly259 and Pro260.

The protein belongs to the aspartate/ornithine carbamoyltransferase superfamily. ATCase family. Heterododecamer (2C3:3R2) of six catalytic PyrB chains organized as two trimers (C3), and six regulatory PyrI chains organized as three dimers (R2).

The enzyme catalyses carbamoyl phosphate + L-aspartate = N-carbamoyl-L-aspartate + phosphate + H(+). It functions in the pathway pyrimidine metabolism; UMP biosynthesis via de novo pathway; (S)-dihydroorotate from bicarbonate: step 2/3. Catalyzes the condensation of carbamoyl phosphate and aspartate to form carbamoyl aspartate and inorganic phosphate, the committed step in the de novo pyrimidine nucleotide biosynthesis pathway. The polypeptide is Aspartate carbamoyltransferase catalytic subunit (Caldicellulosiruptor bescii (strain ATCC BAA-1888 / DSM 6725 / KCTC 15123 / Z-1320) (Anaerocellum thermophilum)).